An 85-amino-acid polypeptide reads, in one-letter code: Keratin-associated protein 7-1 (85 aa).

The 12 X 2 AA repeats of G-[YCGS] stretch occupies residues 37–82; that stretch reads GSPLGYGCNGYSSLGYGFGGSSFSNLGCGYGGSFYRPWGSGSGFGY.

Belongs to the KRTAP type 7 family. Interacts with wool keratins. As to expression, wool.

In terms of biological role, in the wool cortex, wool keratin intermediate filaments are embedded in an interfilamentous matrix, consisting of hair keratin-associated proteins (KRTAP), which are essential for the formation of a rigid and resistant wool shaft through their extensive disulfide bond cross-linking with abundant cysteine residues of wool keratins. The matrix proteins include the high-sulfur and high-glycine-tyrosine keratins. The sequence is that of Keratin-associated protein 7-1 (KRTAP7-1) from Ovis aries (Sheep).